Reading from the N-terminus, the 74-residue chain is UPF0346 protein RBAM_019500 (74 aa).

Belongs to the UPF0346 family.

The sequence is that of UPF0346 protein RBAM_019500 from Bacillus velezensis (strain DSM 23117 / BGSC 10A6 / LMG 26770 / FZB42) (Bacillus amyloliquefaciens subsp. plantarum).